A 131-amino-acid chain; its full sequence is Fluoride-specific ion channel FluC 1 (131 aa).

Helical transmembrane passes span 4 to 24 (ILLI…LSGW), 32 to 52 (FPLG…LVMY), 66 to 86 (ILLT…SYES), and 95 to 115 (LMQL…AVYL). Gly74 and Thr77 together coordinate Na(+).

The protein belongs to the fluoride channel Fluc/FEX (TC 1.A.43) family.

Its subcellular location is the cell membrane. The enzyme catalyses fluoride(in) = fluoride(out). With respect to regulation, na(+) is not transported, but it plays an essential structural role and its presence is essential for fluoride channel function. Functionally, fluoride-specific ion channel. Important for reducing fluoride concentration in the cell, thus reducing its toxicity. This chain is Fluoride-specific ion channel FluC 1, found in Methanosarcina acetivorans (strain ATCC 35395 / DSM 2834 / JCM 12185 / C2A).